Here is a 341-residue protein sequence, read N- to C-terminus: L-threonine 3-dehydrogenase (341 aa).

Cys38 contacts Zn(2+). Active-site charge relay system residues include Thr40 and His43. Zn(2+) is bound by residues His63, Glu64, Cys93, Cys96, Cys99, and Cys107. Residues Ile175, Asp195, Arg200, 262–264 (LGI), and 286–287 (IY) each bind NAD(+).

The protein belongs to the zinc-containing alcohol dehydrogenase family. As to quaternary structure, homotetramer. It depends on Zn(2+) as a cofactor.

The protein resides in the cytoplasm. It catalyses the reaction L-threonine + NAD(+) = (2S)-2-amino-3-oxobutanoate + NADH + H(+). It participates in amino-acid degradation; L-threonine degradation via oxydo-reductase pathway; glycine from L-threonine: step 1/2. Catalyzes the NAD(+)-dependent oxidation of L-threonine to 2-amino-3-ketobutyrate. This is L-threonine 3-dehydrogenase from Escherichia coli O157:H7.